The chain runs to 303 residues: Diaminopimelate epimerase (303 aa).

Asparagine 15, glutamine 47, and asparagine 67 together coordinate substrate. The active-site Proton donor is cysteine 76. Substrate contacts are provided by residues 77 to 78 (GN), asparagine 163, asparagine 197, and 215 to 216 (ER). The active-site Proton acceptor is cysteine 224. Position 225-226 (225-226 (GS)) interacts with substrate. The disordered stretch occupies residues 278–303 (FDPATGEWSRDTQGLQGSGNADRGAA).

This sequence belongs to the diaminopimelate epimerase family. Homodimer.

The protein localises to the cytoplasm. It carries out the reaction (2S,6S)-2,6-diaminopimelate = meso-2,6-diaminopimelate. Its pathway is amino-acid biosynthesis; L-lysine biosynthesis via DAP pathway; DL-2,6-diaminopimelate from LL-2,6-diaminopimelate: step 1/1. Catalyzes the stereoinversion of LL-2,6-diaminopimelate (L,L-DAP) to meso-diaminopimelate (meso-DAP), a precursor of L-lysine and an essential component of the bacterial peptidoglycan. The sequence is that of Diaminopimelate epimerase from Brucella melitensis biotype 1 (strain ATCC 23456 / CCUG 17765 / NCTC 10094 / 16M).